Here is a 221-residue protein sequence, read N- to C-terminus: GTP-binding nuclear protein Ran-1 (221 aa).

One can recognise a Small GTPase Ran-type domain in the interval 10–174 (DYPSFKLVIV…LYLARKLAGD (165 aa)). 21 to 28 (DGGTGKTT) contributes to the GTP binding site. The switch-I stretch occupies residues 40-48 (KKYEPTIGV). GTP is bound by residues Gly71, 125–128 (NKVD), and 153–155 (SAK). The segment at 71–87 (GQEKFGGLRDGYYIHGQ) is switch-II.

It belongs to the small GTPase superfamily. Ran family. As to quaternary structure, found in a nuclear export complex with RanGTP, exportin and pre-miRNA. Interacts with RANBP1A and RANBP1B. Interacts with TRN1. Interacts with ATX1. Interacts with KPNB1. Binds to XPO1. Interacts with MOS14. Binds to NTF2B.

The protein resides in the nucleus. GTP-binding protein involved in nucleocytoplasmic transport. Required for the import of protein into the nucleus and also for RNA export. Involved in chromatin condensation and control of cell cycle. This is GTP-binding nuclear protein Ran-1 (RAN1) from Arabidopsis thaliana (Mouse-ear cress).